The chain runs to 533 residues: Flavin-containing monooxygenase 5 (533 aa).

Dimethylated arginine is present on Arg5. FAD is bound by residues 10-14, Glu33, and 41-42; these read GAGAS and LW. Ser54 bears the Phosphoserine mark. Tyr56 carries the phosphotyrosine modification. Phosphoserine is present on Ser58. 62–63 contacts FAD; that stretch reads NT. Residue 196–199 participates in NADP(+) binding; it reads SGGD. Phosphoserine is present on Ser280. At Thr284 the chain carries Phosphothreonine. Ser401 is subject to Phosphoserine. Residues 513–533 traverse the membrane as a helical segment; sequence LVTVRVLMLAVAFFAVILAYF.

Belongs to the FMO family. It depends on FAD as a cofactor. Expressed in liver (at protein level). Expressed in the mucosal epithelium of the gastrointestinal tract.

The protein resides in the microsome membrane. It is found in the endoplasmic reticulum membrane. It catalyses the reaction N,N-dimethylaniline + NADPH + O2 + H(+) = N,N-dimethylaniline N-oxide + NADP(+) + H2O. The catalysed reaction is NADPH + O2 + H(+) = H2O2 + NADP(+). The enzyme catalyses heptan-2-one + NADPH + O2 + H(+) = pentyl acetate + NADP(+) + H2O. It carries out the reaction octan-3-one + NADPH + O2 + H(+) = pentyl propanoate + NADP(+) + H2O. It catalyses the reaction octan-3-one + NADPH + O2 + H(+) = ethyl hexanoate + NADP(+) + H2O. The catalysed reaction is hexan-3-one + NADPH + O2 + H(+) = ethyl butanoate + NADP(+) + H2O. The enzyme catalyses hexan-3-one + NADPH + O2 + H(+) = propyl propanoate + NADP(+) + H2O. It carries out the reaction heptan-4-one + NADPH + O2 + H(+) = propyl butanoate + NADP(+) + H2O. It catalyses the reaction (2E)-geranial + NADPH + O2 + H(+) = (1E)-2,6-dimethylhepta-1,5-dien-1-yl formate + NADP(+) + H2O. The catalysed reaction is sulcatone + NADPH + O2 + H(+) = 4-methylpent-3-en-1-yl acetate + NADP(+) + H2O. In terms of biological role, acts as a Baeyer-Villiger monooxygenase on a broad range of substrates. Catalyzes the insertion of an oxygen atom into a carbon-carbon bond adjacent to a carbonyl, which converts ketones to esters. Active on diverse carbonyl compounds, whereas soft nucleophiles are mostly non- or poorly reactive. In contrast with other forms of FMO it is non- or poorly active on 'classical' substrates such as drugs, pesticides, and dietary components containing soft nucleophilic heteroatoms. Able to oxidize drug molecules bearing a carbonyl group on an aliphatic chain, such as nabumetone and pentoxifylline. Also, in the absence of substrates, shows slow but yet significant NADPH oxidase activity. Acts as a positive modulator of cholesterol biosynthesis as well as glucose homeostasis, promoting metabolic aging via pleiotropic effects. This Mus musculus (Mouse) protein is Flavin-containing monooxygenase 5.